Reading from the N-terminus, the 531-residue chain is Cation transporter HKT1;3 (531 aa).

Over 1–46 the chain is Cytoplasmic; it reads MNHCLVVSHKKLQTFRTFAASKFSSFTKSAQKSIKYSFQFIYQNNP. The next 2 helical transmembrane spans lie at 47–67 and 108–128; these read LFVH…SLKV and LWVL…MLGI. Topologically, residues 129–190 are cytoplasmic; that stretch reads HFMRAEFGTK…GGHVEPKTIK (62 aa). The next 2 membrane-spanning stretches (helical) occupy residues 191–211 and 264–284; these read FLGF…SLLI and ILLL…APCL. The Cytoplasmic segment spans residues 285-321; that stretch reads RLMVWSLEKITGKKDCRYILEYPKAIGYKHLMSTRES. A run of 2 helical transmembrane segments spans residues 322-342 and 383-403; these read VYLT…FLSL and SAIL…SFLP. The Cytoplasmic portion of the chain corresponds to 404 to 421; it reads RHDGEDSKTEKINKRKGL. Helical transmembrane passes span 422-442 and 494-514; these read LENW…LICI and YGFA…VMLF. The Cytoplasmic portion of the chain corresponds to 515-530; the sequence is GRLKTFNMKGGRAWKL.

Belongs to the TrkH potassium transport family. HKT (TC 2.A.38.3) subfamily. Interacts with CNIH1. As to expression, weakly expressed. In roots, expressed in epidermis, exodermis, cortex, and sieve elements and companion cells of phloem. In mature leaves, expressed in large highly vacuolated cells of the adaxial epidermis, phloem and xylem.

The protein localises to the endoplasmic reticulum membrane. It is found in the golgi apparatus membrane. The catalysed reaction is Na(+)(in) = Na(+)(out). Its function is as follows. Functions as a highly-selective sodium transporter. Does not seem to function as sodium-potassium cotransporter. May be involved in turgor changes for rolling and unrolling of leaves in response to environmental variations. The sequence is that of Cation transporter HKT1;3 from Oryza sativa subsp. japonica (Rice).